A 353-amino-acid chain; its full sequence is uncharacterized protein (353 aa).

The signal sequence occupies residues Met-1–Gly-24.

The protein belongs to the chlamydial CPn_1058/CT_355/TC_0634 family.

This is an uncharacterized protein from Chlamydia muridarum (strain MoPn / Nigg).